We begin with the raw amino-acid sequence, 318 residues long: NADH-ubiquinone oxidoreductase chain 1 (318 aa).

The next 8 membrane-spanning stretches (helical) occupy residues 3-23 (FVNL…LTLL), 68-88 (LILF…MWIP), 102-122 (ILFM…SGWA), 146-166 (LAII…STLI), 171-191 (HIWL…STLA), 222-242 (LFFL…TILF), 253-273 (EMYT…FLWI), and 294-314 (LPLT…LASI).

The protein belongs to the complex I subunit 1 family.

The protein resides in the mitochondrion inner membrane. The enzyme catalyses a ubiquinone + NADH + 5 H(+)(in) = a ubiquinol + NAD(+) + 4 H(+)(out). Its function is as follows. Core subunit of the mitochondrial membrane respiratory chain NADH dehydrogenase (Complex I) that is believed to belong to the minimal assembly required for catalysis. Complex I functions in the transfer of electrons from NADH to the respiratory chain. The immediate electron acceptor for the enzyme is believed to be ubiquinone. The chain is NADH-ubiquinone oxidoreductase chain 1 (MT-ND1) from Nyctalus plancyi velutinus (Fine-haired noctule).